We begin with the raw amino-acid sequence, 365 residues long: Histidinol-phosphate aminotransferase 2 (365 aa).

Lysine 226 carries the post-translational modification N6-(pyridoxal phosphate)lysine.

It belongs to the class-II pyridoxal-phosphate-dependent aminotransferase family. Histidinol-phosphate aminotransferase subfamily. As to quaternary structure, homodimer. Pyridoxal 5'-phosphate serves as cofactor.

The enzyme catalyses L-histidinol phosphate + 2-oxoglutarate = 3-(imidazol-4-yl)-2-oxopropyl phosphate + L-glutamate. It functions in the pathway amino-acid biosynthesis; L-histidine biosynthesis; L-histidine from 5-phospho-alpha-D-ribose 1-diphosphate: step 7/9. The polypeptide is Histidinol-phosphate aminotransferase 2 (hisC2) (Pasteurella multocida (strain Pm70)).